The sequence spans 416 residues: Phosphoglycerate kinase (416 aa).

The (2R)-3-phosphoglycerate site is built by valine 23, aspartate 24, phenylalanine 25, asparagine 26, glutamine 39, arginine 40, serine 63, histidine 64, glycine 66, arginine 67, leucine 122, arginine 123, histidine 170, and arginine 171. Glycine 214 is a binding site for ADP. Glycine 214 is a binding site for CDP. Alanine 215 and lysine 216 together coordinate AMP. Alanine 215 lines the ATP pocket. Alanine 215 contributes to the Mg(2+) binding site. Residue aspartate 219 participates in CDP binding. Aspartate 219 contributes to the Mg(2+) binding site. Residue lysine 220 coordinates AMP. Lysine 220 is a binding site for ATP. Residue glycine 238 coordinates ADP. Glycine 238 serves as a coordination point for CDP. AMP is bound by residues glycine 239 and glycine 312. Positions 239 and 312 each coordinate ATP. CDP-binding residues include glycine 337, alanine 339, and phenylalanine 342. Residue phenylalanine 342 coordinates ADP. Glutamate 343 contacts AMP. Glutamate 343, aspartate 374, and threonine 375 together coordinate ATP. Mg(2+) is bound at residue aspartate 374.

It belongs to the phosphoglycerate kinase family. Monomer. It depends on Mg(2+) as a cofactor.

Its subcellular location is the cytoplasm. The protein resides in the mitochondrion. The catalysed reaction is (2R)-3-phosphoglycerate + ATP = (2R)-3-phospho-glyceroyl phosphate + ADP. It participates in carbohydrate degradation; glycolysis; pyruvate from D-glyceraldehyde 3-phosphate: step 2/5. Catalyzes one of the two ATP producing reactions in the glycolytic pathway via the reversible conversion of 1,3-diphosphoglycerate to 3-phosphoglycerate. Both L- and D- forms of purine and pyrimidine nucleotides can be used as substrates, but the activity is much lower on pyrimidines. Negatively regulates the biosynthesis of acetyl-CoA from pyruvate in the mitochondrion. In Hypocrea jecorina (Trichoderma reesei), this protein is Phosphoglycerate kinase (pgk1).